Here is a 346-residue protein sequence, read N- to C-terminus: Protein farnesyltransferase/geranylgeranyltransferase type-1 subunit alpha (346 aa).

PFTA repeat units lie at residues 59–93 (RSTRALQLTGEAIQLNPGNYTVWQFRRVVLEALGV), 94–128 (DLREELKFVDRIAGENTKNYQIWHHRRWLAEKLGA), 130–164 (AVTNELEFTKKIFSQDAKNYHAWSHRQWVLQALGG), 165–198 (WEDELAYCQQLLEDDIYNNSAWNQRYFVVTRSPL), and 205–239 (MRELEVNYTVQAIRASPENESPWRYLRGLYKNDTQ).

Belongs to the protein prenyltransferase subunit alpha family. Heterodimer of an alpha and a beta subunit. Mg(2+) serves as cofactor.

It carries out the reaction L-cysteinyl-[protein] + (2E,6E)-farnesyl diphosphate = S-(2E,6E)-farnesyl-L-cysteinyl-[protein] + diphosphate. The enzyme catalyses geranylgeranyl diphosphate + L-cysteinyl-[protein] = S-geranylgeranyl-L-cysteinyl-[protein] + diphosphate. In terms of biological role, essential subunit of both the farnesyltransferase and the geranylgeranyltransferase complex. Contributes to the transfer of a farnesyl or geranylgeranyl moiety from farnesyl or geranylgeranyl diphosphate to a cysteine at the fourth position from the C-terminus of several proteins having the C-terminal sequence Cys-aliphatic-aliphatic-X. This Solanum lycopersicum (Tomato) protein is Protein farnesyltransferase/geranylgeranyltransferase type-1 subunit alpha (FTA).